A 342-amino-acid polypeptide reads, in one-letter code: Glycerol-1-phosphate dehydrogenase [NAD(P)+] (342 aa).

Residues Gly84–Asp88 and Thr106–Ser109 contribute to the NAD(+) site. Asp111 is a binding site for substrate. Position 115 (Ser115) interacts with NAD(+). Substrate is bound at residue Asp160. 2 residues coordinate Zn(2+): Asp160 and His241. Residue His245 coordinates substrate. Zn(2+) is bound at residue His260.

Belongs to the glycerol-1-phosphate dehydrogenase family. In terms of assembly, homodimer. Zn(2+) serves as cofactor.

It is found in the cytoplasm. The enzyme catalyses sn-glycerol 1-phosphate + NAD(+) = dihydroxyacetone phosphate + NADH + H(+). It catalyses the reaction sn-glycerol 1-phosphate + NADP(+) = dihydroxyacetone phosphate + NADPH + H(+). Its pathway is membrane lipid metabolism; glycerophospholipid metabolism. Its function is as follows. Catalyzes the NAD(P)H-dependent reduction of dihydroxyacetonephosphate (DHAP or glycerone phosphate) to glycerol 1-phosphate (G1P). The G1P thus generated is used as the glycerophosphate backbone of phospholipids in the cellular membranes of Archaea. This is Glycerol-1-phosphate dehydrogenase [NAD(P)+] from Pyrobaculum arsenaticum (strain DSM 13514 / JCM 11321 / PZ6).